We begin with the raw amino-acid sequence, 413 residues long: Sporulation-specific protein 74 (413 aa).

A disordered region spans residues 1 to 87; the sequence is MGAGTLLNGL…SEHTDDFNDG (87 aa). Basic and acidic residues predominate over residues 69–83; it reads HENKDIHERSEHTDD.

As to quaternary structure, interacts with itself. Interacts with MPC54, NUD1 and SPO21/MPC70.

The protein localises to the cytoplasm. Its subcellular location is the cytoskeleton. The protein resides in the microtubule organizing center. It is found in the spindle pole body. Its function is as follows. Involved in the pathway that organizes the shaping and sizing of the prospore membrane (PSM) during sporulation. Probable component of a core structural unit of the scaffold that initiates synthesis of the prospore membrane. This is Sporulation-specific protein 74 (SPO74) from Saccharomyces cerevisiae (strain ATCC 204508 / S288c) (Baker's yeast).